The sequence spans 510 residues: tRNA-2-methylthio-N(6)-dimethylallyladenosine synthase (510 aa).

Residues 1–25 (MSGFNDSPVPESAEKADGLLSQERG) are disordered. One can recognise an MTTase N-terminal domain in the interval 34–154 (RKLFVKSYGC…LPDLLRRVAH (121 aa)). The [4Fe-4S] cluster site is built by cysteine 43, cysteine 79, cysteine 117, cysteine 195, cysteine 199, and cysteine 202. In terms of domain architecture, Radical SAM core spans 181–414 (AERGVGAFVT…QALLEEQRQA (234 aa)). The 63-residue stretch at 417–479 (KAMIGRVLPV…PNSFHGRLLA (63 aa)) folds into the TRAM domain. Polar residues predominate over residues 484 to 493 (QESAQGQESA). Positions 484-510 (QESAQGQESAQGMERMEQNARAWEVPV) are disordered.

Belongs to the methylthiotransferase family. MiaB subfamily. In terms of assembly, monomer. [4Fe-4S] cluster serves as cofactor.

It localises to the cytoplasm. The enzyme catalyses N(6)-dimethylallyladenosine(37) in tRNA + (sulfur carrier)-SH + AH2 + 2 S-adenosyl-L-methionine = 2-methylsulfanyl-N(6)-dimethylallyladenosine(37) in tRNA + (sulfur carrier)-H + 5'-deoxyadenosine + L-methionine + A + S-adenosyl-L-homocysteine + 2 H(+). Functionally, catalyzes the methylthiolation of N6-(dimethylallyl)adenosine (i(6)A), leading to the formation of 2-methylthio-N6-(dimethylallyl)adenosine (ms(2)i(6)A) at position 37 in tRNAs that read codons beginning with uridine. This is tRNA-2-methylthio-N(6)-dimethylallyladenosine synthase from Beijerinckia indica subsp. indica (strain ATCC 9039 / DSM 1715 / NCIMB 8712).